The sequence spans 340 residues: MSIPTRKIGNDTVPAIGFGCMGLHAMYGPSSEEANQAVLTHAADLGCTFWDSSDMYGFGANEECIGRWFKQTGRRKEIFLATKFGYEKNPETGELSLNNEPDYIEKALDLSLKRLGIDCIDLYYVHRFSGETPIEKIMGALKKCVEAGKIRYIGLSECSANTIRRAAAVYPVSAVQVEYSPFSLEIERPEIGVMKACRENNITIVCYAPLGRGFLTGAYKSPDDFPEGDFRRKAPRYQKENFYKNLELVTKIEKIATANNITPGQLSLAWLLAQGDDILPIPGTKRVKYLEENFGALKVKLSDATVKEIREACDNAEVIGARYPPGAGSKIFMDTPPMPK.

The active-site Proton donor is the Tyr-56. His-126 serves as a coordination point for substrate. 208-218 is a binding site for NADP(+); it reads APLGRGFLTGA.

It belongs to the aldo/keto reductase family. Aldo/keto reductase 2 subfamily. As to quaternary structure, monomer.

This chain is Aldo-keto reductase yakc [NADP(+)] (yakc), found in Schizosaccharomyces pombe (strain 972 / ATCC 24843) (Fission yeast).